The chain runs to 119 residues: Holo-[acyl-carrier-protein] synthase (119 aa).

The Mg(2+) site is built by Asp8 and Glu58.

The protein belongs to the P-Pant transferase superfamily. AcpS family. It depends on Mg(2+) as a cofactor.

The protein localises to the cytoplasm. The enzyme catalyses apo-[ACP] + CoA = holo-[ACP] + adenosine 3',5'-bisphosphate + H(+). Functionally, transfers the 4'-phosphopantetheine moiety from coenzyme A to a Ser of acyl-carrier-protein. This Oceanobacillus iheyensis (strain DSM 14371 / CIP 107618 / JCM 11309 / KCTC 3954 / HTE831) protein is Holo-[acyl-carrier-protein] synthase.